The following is a 370-amino-acid chain: MKFIDEARIEVIAGQGGAGSASMRREKFIEFGGPDGGDGGKGGSVWATADRNINTLIDYRYAKTHTAKNGEPGRGADCYGRAGDDIELRMPVGTIISDYETGEPIADLTTHGERLCLAQGGVGGWGNIHFKSSTNRAPRQKTNGKSGERRKLKLELKVLADVGLLGMPNAGKSTLITAVSNARPKIADYPFTTLHPNLGVVRVGSERSFVIADIPGLIEGAAEGAGLGHRFLRHLQRTGVLLHLVDIAPFDANVDPVADAAAIVNELRKYDEALVEKPRWLVLNKVDIIPEEGRKKVVSDFVKKFKWKGPVFEISALTGMGCDKLCYSLQDYLDSIRRDRDDAGERAQDPRYQDQPEDKNQIKYFTCALL.

The Obg domain occupies 1–159 (MKFIDEARIE…RKLKLELKVL (159 aa)). Positions 129–148 (HFKSSTNRAPRQKTNGKSGE) are disordered. Polar residues predominate over residues 130-145 (FKSSTNRAPRQKTNGK). Residues 160–334 (ADVGLLGMPN…LCYSLQDYLD (175 aa)) form the OBG-type G domain. GTP is bound by residues 166–173 (GMPNAGKS), 191–195 (FTTLH), 213–216 (DIPG), 284–287 (NKVD), and 315–317 (SAL). Mg(2+) contacts are provided by S173 and T193.

It belongs to the TRAFAC class OBG-HflX-like GTPase superfamily. OBG GTPase family. In terms of assembly, monomer. Mg(2+) is required as a cofactor.

It is found in the cytoplasm. An essential GTPase which binds GTP, GDP and possibly (p)ppGpp with moderate affinity, with high nucleotide exchange rates and a fairly low GTP hydrolysis rate. Plays a role in control of the cell cycle, stress response, ribosome biogenesis and in those bacteria that undergo differentiation, in morphogenesis control. In Polynucleobacter necessarius subsp. necessarius (strain STIR1), this protein is GTPase Obg.